The primary structure comprises 254 residues: Flavin-dependent thymidylate synthase (254 aa).

In terms of domain architecture, ThyX spans 7–237; it reads LRVQLIARTE…PAVFADFEIY (231 aa). Residues S71, 95–97, and Q103 contribute to the FAD site; that span reads RHR. DUMP contacts are provided by residues 92–95, 103–107, and R176; these read ELIR and QLSQR. The short motif at 95 to 105 is the ThyX motif element; that stretch reads RHRHFSYSQLS. Residues 192–194 and H198 each bind FAD; that span reads NYR. A dUMP-binding site is contributed by R203. Catalysis depends on R203, which acts as the Involved in ionization of N3 of dUMP, leading to its activation.

This sequence belongs to the thymidylate synthase ThyX family. Homotetramer. FAD is required as a cofactor.

It carries out the reaction dUMP + (6R)-5,10-methylene-5,6,7,8-tetrahydrofolate + NADPH + H(+) = dTMP + (6S)-5,6,7,8-tetrahydrofolate + NADP(+). It functions in the pathway pyrimidine metabolism; dTTP biosynthesis. Functionally, catalyzes the reductive methylation of 2'-deoxyuridine-5'-monophosphate (dUMP) to 2'-deoxythymidine-5'-monophosphate (dTMP) while utilizing 5,10-methylenetetrahydrofolate (mTHF) as the methyl donor, and NADPH and FADH(2) as the reductant. The chain is Flavin-dependent thymidylate synthase from Mycobacterium sp. (strain JLS).